The chain runs to 286 residues: MEETAEKTPVEAYSTLKPKGLMKMKKTALVAFIAGAALLLFGGVGAFYLWKVTEKEAISAHLGRNIDIKIENDSDSAEGTIVEVQDFKAGITAVKFPGKEKCFIKSQARTELSEDEAGVKAEVASLVWITSEEPLKDSSFLSPEILRFCADLPIYWHHPANSRALRKRRSATRMRRQTSAGVNRQPARRRNSTASARDERPTGPEYNPENPYHQNQGSEGTMVFDPMLDHRGICCTECHRSYTHCERVCEPLGGYWPWPYNYHGCRPVCRLIMPCRWWAARVLGLV.

Residues 29–49 (LVAFIAGAALLLFGGVGAFYL) traverse the membrane as a helical segment. The BRICHOS domain maps to 75-157 (DSAEGTIVEV…FCADLPIYWH (83 aa)). Cysteines 102 and 149 form a disulfide. Positions 166–169 (RKRR) are excised as a propeptide. Basic residues predominate over residues 166 to 176 (RKRRSATRMRR). The disordered stretch occupies residues 166–220 (RKRRSATRMRRQTSAGVNRQPARRRNSTASARDERPTGPEYNPENPYHQNQGSEG). Asn191 carries N-linked (GlcNAc...) asparagine glycosylation. Cystine bridges form between Cys234–Cys238, Cys235–Cys275, Cys245–Cys269, and Cys249–Cys265.

This sequence belongs to the chondromodulin-1 family. Post-translationally, after cleavage, the post-translationally modified ChM-I is secreted as a glycoprotein.

The protein resides in the secreted. The protein localises to the extracellular space. Its subcellular location is the extracellular matrix. It is found in the endomembrane system. Functionally, bifunctional growth regulator. May contribute to the rapid growth of cartilage and vascular invasion prior to the replacement of cartilage by bone during endochondral bone development. Plays a role as antiangiogenic factor in cardiac valves to suppress neovascularization. The polypeptide is Leukocyte cell-derived chemotaxin 1 (Danio rerio (Zebrafish)).